The sequence spans 107 residues: DNA polymerase delta subunit 4 (107 aa).

Residues methionine 1–arginine 16 carry the PCNA-interaction protein motif (PIP box) motif. The segment at methionine 1 to glutamate 35 is disordered. Residues lysine 15 to leucine 28 show a composition bias toward basic and acidic residues.

The protein belongs to the DNA polymerase delta subunit 4 family. As to quaternary structure, component of the tetrameric DNA polymerase delta complex (Pol-delta4), which consists of POLD1/p125, POLD2/p50, POLD3/p66/p68 and POLD4/p12, with POLD1 bearing DNA polymerase and 3' to 5' proofreading exonuclease activities. Within this complex, directly interacts with POLD1 and POLD2. Directly interacts with PCNA, as do POLD1 and POLD3; this interaction stimulates Pol-delta4 polymerase activity. As POLD1 and POLD2, directly interacts with WRNIP1; this interaction stimulates DNA polymerase delta-mediated DNA synthesis, independently of the presence of PCNA, possibly by increasing initiation frequency. Upon genotoxic stress induced by DNA damaging agents or by replication stress, POLD4 is proteolytically degraded and Pol-delta4 is converted into a trimeric form of the complex (Pol-delta3) that has an increased proofreading activity. The DNA polymerase delta complex interacts with POLDIP2; this interaction is probably mediated through direct binding to POLD2. Ubiquitinated; undergoes 'Lys-48'-linked ubiquitination in response to UV irradiation, leading to proteasomal degradation. This modification is partly mediated by RNF8 and by the DCX(DTL) E3 ubiquitin ligase complex (also called CRL4(CDT2)). Efficient degradation requires the presence of PCNA and is required for the inhibition of fork progression after DNA damage.

It localises to the nucleus. Functionally, as a component of the tetrameric DNA polymerase delta 4 complex (Pol-delta4), plays a role in high fidelity genome replication and repair. Within this complex, increases the rate of DNA synthesis and decreases fidelity by regulating POLD1 polymerase and proofreading 3' to 5' exonuclease activity. Pol-delta4 participates in Okazaki fragment processing, through both the short flap pathway, as well as a nick translation system. Under conditions of DNA replication stress, required for the repair of broken replication forks through break-induced replication (BIR), a mechanism that may induce segmental genomic duplications of up to 200 kb. Involved in Pol-delta4 translesion synthesis (TLS) of templates carrying O6-methylguanine or abasic sites. Its degradation in response to DNA damage is required for the inhibition of fork progression and cell survival. The polypeptide is DNA polymerase delta subunit 4 (POLD4) (Bos taurus (Bovine)).